Here is a 776-residue protein sequence, read N- to C-terminus: Reticulon-1 (776 aa).

Disordered stretches follow at residues 1 to 101 (MAAP…KDGE), 137 to 168 (SESP…DSGI), 205 to 245 (VKHQ…PAPV), and 285 to 580 (LTEI…APPP). Residue Ser-327 is modified to Phosphoserine. Residues 328 to 341 (PGSITPPSSGTEPS) show a composition bias toward low complexity. Residues Ser-350, Ser-352, and Ser-487 each carry the phosphoserine modification. Residues 497 to 511 (AIREETGVRAEERAP) show a composition bias toward basic and acidic residues. The 188-residue stretch at 589–776 (AIDLLYWRDI…KIPGAKRHAE (188 aa)) folds into the Reticulon domain. 2 helical membrane-spanning segments follow: residues 603–623 (IVFG…VVSV) and 705–725 (FAVL…LTLL).

As to quaternary structure, interacts with NDRG1. Interacts with BACE1. Interacts with TMEM33. In terms of assembly, interacts with UGCG; regulates the ceramide glucosyltransferase activity of UGCG. Post-translationally, isoforms RTN1-A and RTN1-B are phosphorylated. In terms of tissue distribution, expressed in neural and neuroendocrine tissues and cell cultures derived therefrom. Expression of isoform RTN1-C is strongly correlated with neuronal differentiation.

The protein localises to the endoplasmic reticulum membrane. Its subcellular location is the golgi apparatus membrane. Its function is as follows. Inhibits amyloid precursor protein processing, probably by blocking BACE1 activity. In Homo sapiens (Human), this protein is Reticulon-1 (RTN1).